Reading from the N-terminus, the 84-residue chain is U-scoloptoxin(10)-Er1a (84 aa).

An N-terminal signal peptide occupies residues 1 to 24; it reads MSRFCLLFVAFGFVLYFLHMEVTG.

It belongs to the scoloptoxin-10 family. In terms of processing, contains 3 disulfide bonds. In terms of tissue distribution, expressed by the venom gland.

The protein localises to the secreted. This chain is U-scoloptoxin(10)-Er1a, found in Ethmostigmus rubripes (Giant centipede).